The sequence spans 346 residues: Probable choline kinase 1 (346 aa).

ATP-binding residues include R73, Q210, and D227.

It belongs to the choline/ethanolamine kinase family. Expressed in roots. Expressed at low levels in cauline leaves and flowers.

The enzyme catalyses choline + ATP = phosphocholine + ADP + H(+). It functions in the pathway phospholipid metabolism; phosphatidylcholine biosynthesis; phosphocholine from choline: step 1/1. Involved in phospholipid biosynthesis. Catalyzes the first step in phosphatidylcholine biosynthesis. The sequence is that of Probable choline kinase 1 (CK1) from Arabidopsis thaliana (Mouse-ear cress).